Here is a 164-residue protein sequence, read N- to C-terminus: Phosphopantetheine adenylyltransferase (164 aa).

Thr10 is a binding site for substrate. Residues 10 to 11 (TF) and His18 each bind ATP. Substrate is bound by residues Lys42, Leu74, and Arg88. ATP is bound by residues 89–91 (GIR), Glu99, and 124–130 (NSFISST).

Belongs to the bacterial CoaD family. In terms of assembly, homohexamer. Mg(2+) serves as cofactor.

The protein localises to the cytoplasm. The enzyme catalyses (R)-4'-phosphopantetheine + ATP + H(+) = 3'-dephospho-CoA + diphosphate. It functions in the pathway cofactor biosynthesis; coenzyme A biosynthesis; CoA from (R)-pantothenate: step 4/5. Functionally, reversibly transfers an adenylyl group from ATP to 4'-phosphopantetheine, yielding dephospho-CoA (dPCoA) and pyrophosphate. In Pseudoalteromonas translucida (strain TAC 125), this protein is Phosphopantetheine adenylyltransferase.